The chain runs to 340 residues: Anthranilate phosphoribosyltransferase (340 aa).

Residues G80, 83–84 (GD), T88, 90–93 (NIST), 108–116 (KHGNRAMSS), and S120 each bind 5-phospho-alpha-D-ribose 1-diphosphate. G80 lines the anthranilate pocket. Residue S92 coordinates Mg(2+). N111 serves as a coordination point for anthranilate. R166 serves as a coordination point for anthranilate. Mg(2+) contacts are provided by D225 and E226.

Belongs to the anthranilate phosphoribosyltransferase family. As to quaternary structure, homodimer. Mg(2+) is required as a cofactor.

The catalysed reaction is N-(5-phospho-beta-D-ribosyl)anthranilate + diphosphate = 5-phospho-alpha-D-ribose 1-diphosphate + anthranilate. Its pathway is amino-acid biosynthesis; L-tryptophan biosynthesis; L-tryptophan from chorismate: step 2/5. Its function is as follows. Catalyzes the transfer of the phosphoribosyl group of 5-phosphorylribose-1-pyrophosphate (PRPP) to anthranilate to yield N-(5'-phosphoribosyl)-anthranilate (PRA). The sequence is that of Anthranilate phosphoribosyltransferase from Chloroflexus aggregans (strain MD-66 / DSM 9485).